We begin with the raw amino-acid sequence, 60 residues long: Ribosome-inactivating protein dianthin-32 (60 aa).

Belongs to the ribosome-inactivating protein family. Type 1 RIP subfamily.

It catalyses the reaction Endohydrolysis of the N-glycosidic bond at one specific adenosine on the 28S rRNA.. Single-chain ribosome-inactivating protein. This is Ribosome-inactivating protein dianthin-32 from Dianthus caryophyllus (Carnation).